The sequence spans 35 residues: NSFCNLPAVVGRCKGYFPRYFYNTEAGKCQRFIYG.

The region spanning 4–35 (CNLPAVVGRCKGYFPRYFYNTEAGKCQRFIYG) is the BPTI/Kunitz inhibitor domain.

This sequence belongs to the venom Kunitz-type family. Sea anemone type 2 potassium channel toxin subfamily.

It is found in the secreted. It localises to the nematocyst. In terms of biological role, dual-function toxin that inhibits both the serine protease trypsin and voltage-gated potassium channels (Kv). This Actinia equina (Beadlet anemone) protein is Kunitz-type proteinase inhibitor AEPI-III.